Here is a 423-residue protein sequence, read N- to C-terminus: Glucose-1-phosphate adenylyltransferase (423 aa).

Residues Y98, G163, E178–K179, and S189 each bind alpha-D-glucose 1-phosphate.

This sequence belongs to the bacterial/plant glucose-1-phosphate adenylyltransferase family. As to quaternary structure, homotetramer.

It carries out the reaction alpha-D-glucose 1-phosphate + ATP + H(+) = ADP-alpha-D-glucose + diphosphate. It participates in glycan biosynthesis; glycogen biosynthesis. In terms of biological role, involved in the biosynthesis of ADP-glucose, a building block required for the elongation reactions to produce glycogen. Catalyzes the reaction between ATP and alpha-D-glucose 1-phosphate (G1P) to produce pyrophosphate and ADP-Glc. This is Glucose-1-phosphate adenylyltransferase from Thermotoga sp. (strain RQ2).